Reading from the N-terminus, the 147-residue chain is Heavy metal-dependent transcription regulator 2 (147 aa).

An HTH merR-type domain is found at 1-69; sequence MNIGEASKTS…VEQIKELLAL (69 aa). The segment at residues 3-22 is a DNA-binding region (H-T-H motif); the sequence is IGEASKTSGVSSKMIRYYEQ.

It is found in the cytoplasm. In terms of biological role, transcriptional regulator involved in acid tolerance. Binds copper. In Rhizobium meliloti (strain 1021) (Ensifer meliloti), this protein is Heavy metal-dependent transcription regulator 2 (hmrR2).